A 395-amino-acid polypeptide reads, in one-letter code: Probable hercynylcysteine sulfoxide lyase (395 aa).

Positions 1–21 (MQDEAMRRSGANSPAGDSLAD) are disordered. K220 carries the N6-(pyridoxal phosphate)lysine modification.

Belongs to the class-V pyridoxal-phosphate-dependent aminotransferase family. EgtE subfamily. Pyridoxal 5'-phosphate serves as cofactor.

It catalyses the reaction S-(hercyn-2-yl)-L-cysteine S-oxide + AH2 + H(+) = ergothioneine + pyruvate + A + NH4(+). It functions in the pathway amino-acid biosynthesis; ergothioneine biosynthesis. Its function is as follows. Probably catalyzes the conversion of hercynylcysteine sulfoxide to ergothioneine. ERG is one of the major redox buffers which protects bacteria against redox stressors and antibiotics; loss of ERG or mycothiol (MSH, the other major redox buffer in this bacteria) leads to respiratory alterations and bioenergetic deficiencies that negatively impact virulence. The protein is Probable hercynylcysteine sulfoxide lyase of Mycobacterium tuberculosis (strain CDC 1551 / Oshkosh).